Consider the following 695-residue polypeptide: NADPH--cytochrome P450 reductase (695 aa).

Residues 1–8 (MAQLDTLD) are Lumenal-facing. Residues 9 to 31 (VVVLAVLLAGSIAYFTKGTFWAV) form a helical membrane-spanning segment. Over 32 to 695 (AKDPYASSGP…SGSYQEDVWS (664 aa)) the chain is Cytoplasmic. Residues 66–221 (CVIFYGSQTG…DFLAWKEPMW (156 aa)) form the Flavodoxin-like domain. FMN contacts are provided by residues 72–77 (SQTGTA), 123–126 (ATYG), 169–178 (LGNNTYEHYN), and Asp204. Positions 277 to 538 (HNPYIAPIVE…HVRHSNFKLP (262 aa)) constitute an FAD-binding FR-type domain. Arg296 serves as a coordination point for NADP(+). FAD contacts are provided by residues 451-454 (RYYS), 469-471 (TAV), and 486-489 (GVTT). Residues 497–516 (QKQNGDPSPDPHGQTYAING) form a disordered region. NADP(+) is bound by residues Thr552, 614–615 (SR), 620–624 (KVYVQ), and Glu656. Trp694 serves as a coordination point for FAD.

This sequence belongs to the NADPH--cytochrome P450 reductase family. In the N-terminal section; belongs to the flavodoxin family. It in the C-terminal section; belongs to the flavoprotein pyridine nucleotide cytochrome reductase family. FAD is required as a cofactor. FMN serves as cofactor.

The protein localises to the endoplasmic reticulum membrane. It is found in the mitochondrion outer membrane. The protein resides in the cell membrane. It carries out the reaction 2 oxidized [cytochrome P450] + NADPH = 2 reduced [cytochrome P450] + NADP(+) + H(+). Its function is as follows. This enzyme is required for electron transfer from NADP to cytochrome P450 in microsomes. It can also provide electron transfer to heme oxygenase and cytochrome B5. Involved in ergosterol biosynthesis. The protein is NADPH--cytochrome P450 reductase of Emericella nidulans (strain FGSC A4 / ATCC 38163 / CBS 112.46 / NRRL 194 / M139) (Aspergillus nidulans).